A 120-amino-acid polypeptide reads, in one-letter code: Glycine cleavage system H protein (120 aa).

The Lipoyl-binding domain occupies 17 to 99 (VATVGITAHA…QGGGWLYRLK (83 aa)). Lysine 58 is modified (N6-lipoyllysine).

The protein belongs to the GcvH family. The glycine cleavage system is composed of four proteins: P, T, L and H. (R)-lipoate is required as a cofactor.

The glycine cleavage system catalyzes the degradation of glycine. The H protein shuttles the methylamine group of glycine from the P protein to the T protein. This is Glycine cleavage system H protein from Methylorubrum extorquens (strain CM4 / NCIMB 13688) (Methylobacterium extorquens).